Here is a 142-residue protein sequence, read N- to C-terminus: Large ribosomal subunit protein cL37 alpha (142 aa).

The transit peptide at 1–62 (MALLSPLLSL…AQKRGTVVAM (62 aa)) directs the protein to the chloroplast. Residues 123–142 (RKLRKRGAWPPSKMKKLKNV) form a disordered region.

The protein belongs to the chloroplast-specific ribosomal protein cL37 family. As to quaternary structure, component of the chloroplast large ribosomal subunit (LSU). Mature 70S chloroplast ribosomes of higher plants consist of a small (30S) and a large (50S) subunit. The 30S small subunit contains 1 molecule of ribosomal RNA (16S rRNA) and 24 different proteins. The 50S large subunit contains 3 rRNA molecules (23S, 5S and 4.5S rRNA) and 33 different proteins.

The protein resides in the plastid. It localises to the chloroplast. In terms of biological role, component of the chloroplast ribosome (chloro-ribosome), a dedicated translation machinery responsible for the synthesis of chloroplast genome-encoded proteins, including proteins of the transcription and translation machinery and components of the photosynthetic apparatus. In Spinacia oleracea (Spinach), this protein is Large ribosomal subunit protein cL37 alpha (PSRP5).